Reading from the N-terminus, the 343-residue chain is NADH-quinone oxidoreductase subunit H (343 aa).

A run of 8 helical transmembrane segments spans residues 21–41 (WTLVWTILKIAVLIAPILFCV), 95–115 (FILAPILTFSTALVSWAVVPF), 124–144 (VNVGVLFILAMSSLGAYGVLL), 172–192 (MGFTLVPVIMLSGSLNLGDIV), 197–217 (GLWYALPLLPGFFIYFISVVA), 257–277 (IIMVSVLGSLMFLGGWLPPIE), 281–301 (FIPGIVWLILKTGVLIFFFLW), and 317–337 (LGWKVFLPISLAWIFIVGLAM).

Belongs to the complex I subunit 1 family. In terms of assembly, NDH-1 is composed of 14 different subunits. Subunits NuoA, H, J, K, L, M, N constitute the membrane sector of the complex.

The protein localises to the cell inner membrane. It catalyses the reaction a quinone + NADH + 5 H(+)(in) = a quinol + NAD(+) + 4 H(+)(out). In terms of biological role, NDH-1 shuttles electrons from NADH, via FMN and iron-sulfur (Fe-S) centers, to quinones in the respiratory chain. The immediate electron acceptor for the enzyme in this species is believed to be ubiquinone. Couples the redox reaction to proton translocation (for every two electrons transferred, four hydrogen ions are translocated across the cytoplasmic membrane), and thus conserves the redox energy in a proton gradient. This subunit may bind ubiquinone. The sequence is that of NADH-quinone oxidoreductase subunit H from Magnetococcus marinus (strain ATCC BAA-1437 / JCM 17883 / MC-1).